The following is an 87-amino-acid chain: DNA-directed RNA polymerase subunit Rpo5 (87 aa).

The protein belongs to the archaeal Rpo5/eukaryotic RPB5 RNA polymerase subunit family. In terms of assembly, part of the RNA polymerase complex.

It localises to the cytoplasm. It carries out the reaction RNA(n) + a ribonucleoside 5'-triphosphate = RNA(n+1) + diphosphate. In terms of biological role, DNA-dependent RNA polymerase (RNAP) catalyzes the transcription of DNA into RNA using the four ribonucleoside triphosphates as substrates. The protein is DNA-directed RNA polymerase subunit Rpo5 of Thermoplasma volcanium (strain ATCC 51530 / DSM 4299 / JCM 9571 / NBRC 15438 / GSS1).